The following is a 143-amino-acid chain: Deoxyuridine 5'-triphosphate nucleotidohydrolase (143 aa).

Residues 63 to 65 (RSG), Asn-76, 80 to 82 (TID), and Lys-90 each bind substrate.

The protein belongs to the dUTPase family. Mg(2+) is required as a cofactor.

It carries out the reaction dUTP + H2O = dUMP + diphosphate + H(+). It participates in pyrimidine metabolism; dUMP biosynthesis; dUMP from dCTP (dUTP route): step 2/2. Functionally, this enzyme is involved in nucleotide metabolism: it produces dUMP, the immediate precursor of thymidine nucleotides and it decreases the intracellular concentration of dUTP so that uracil cannot be incorporated into DNA. The sequence is that of Deoxyuridine 5'-triphosphate nucleotidohydrolase from Finegoldia magna (strain ATCC 29328 / DSM 20472 / WAL 2508) (Peptostreptococcus magnus).